The chain runs to 164 residues: Protein-export protein SecB (164 aa).

The protein belongs to the SecB family. Homotetramer, a dimer of dimers. One homotetramer interacts with 1 SecA dimer.

It localises to the cytoplasm. Functionally, one of the proteins required for the normal export of preproteins out of the cell cytoplasm. It is a molecular chaperone that binds to a subset of precursor proteins, maintaining them in a translocation-competent state. It also specifically binds to its receptor SecA. This is Protein-export protein SecB from Herminiimonas arsenicoxydans.